Reading from the N-terminus, the 160-residue chain is Oocyte-secreted protein 4B (160 aa).

The signal sequence occupies residues 1-13; it reads MKTSVLLAITAMC.

This sequence belongs to the PLAC1 family.

Its subcellular location is the secreted. The polypeptide is Oocyte-secreted protein 4B (Homo sapiens (Human)).